Reading from the N-terminus, the 422-residue chain is 5-hydroxytryptamine receptor 1A (422 aa).

The segment at 1–23 (MDVLSPGQGNNTTSPPAPFETGG) is disordered. Topologically, residues 1 to 38 (MDVLSPGQGNNTTSPPAPFETGGNTTGISDVTVSYQVI) are extracellular. N-linked (GlcNAc...) asparagine glycans are attached at residues N10, N11, and N24. A helical membrane pass occupies residues 39–59 (TSLLLGTLIFCAVLGNACVVA). Residues 60–73 (AIALERSLQNVANY) lie on the Cytoplasmic side of the membrane. Residues 74 to 98 (LIGSLAVTDLMVSVLVLPMAALYQV) form a helical membrane-spanning segment. At 99 to 107 (LNKWTLGQV) the chain is on the extracellular side. Residues 108 to 132 (TCDLFIALDVLCCTSSILHLCAIAL) traverse the membrane as a helical segment. The cysteines at positions 109 and 187 are disulfide-linked. Serotonin contacts are provided by D116 and C120. Positions 133 to 135 (DRY) match the DRY motif; important for ligand-induced conformation changes motif. Over 133–152 (DRYWAITDPIDYVNKRTPRR) the chain is Cytoplasmic. The chain crosses the membrane as a helical span at residues 153–174 (AAALISLTWLIGFLISIPPMLG). Over 175-193 (WRTPEDRSDPDACTISKDH) the chain is Extracellular. A helical transmembrane segment spans residues 194–216 (GYTIYSTFGAFYIPLLLMLVLYG). Over 217–346 (RIFRAARFRI…LARERKTVKT (130 aa)) the chain is Cytoplasmic. Positions 235–262 (KTGADTRHGASPAPQPKKSVNGESGSRN) are disordered. 1D-myo-inositol 4-phosphate is bound by residues T314, K345, T346, and G352. A helical transmembrane segment spans residues 347–370 (LGIIMGTFILCWLPFFIVALVLPF). The Extracellular segment spans residues 371–378 (CESSCHMP). A helical membrane pass occupies residues 379 to 403 (TLLGAIINWLGYSNSLLNPVIYAYF). An NPxxY motif; important for ligand-induced conformation changes and signaling motif is present at residues 396–400 (NPVIY). 1D-myo-inositol 4-phosphate-binding residues include F403, N404, and K405. Residues 404-422 (NKDFQNAFKKIIKCKFCRQ) lie on the Cytoplasmic side of the membrane.

Belongs to the G-protein coupled receptor 1 family. 5-hydroxytryptamine receptor subfamily. HTR1A sub-subfamily. Heterodimer; heterodimerizes with GPER1. Interacts with YIF1B. Interacts with GPR39 and GALR1. In terms of tissue distribution, detected in lymph nodes, thymus and spleen. Detected in activated T-cells, but not in resting T-cells.

It localises to the cell membrane. The protein localises to the cell projection. It is found in the dendrite. G-protein coupled receptor activity is regulated by lipids: phosphatidylinositol 4-phosphate increases HTR1A-mediated activity. Binding to aripiprazol drug is regulated by cholesterol, which shapes the ligand-binding pocket, determining the specificity for aripiprazol. Activated by IHCH-7179 small molecule: IHCH-7179 acts both as an agonist activator for HTR1A and as an antagonist inhibitor for HTR2A. Activated by SEP-363856 small molecule: IHCH-7179 acts both as an agonist activator for HTR1A and TAAR1. In terms of biological role, G-protein coupled receptor for 5-hydroxytryptamine (serotonin). Also functions as a receptor for various drugs and psychoactive substances. Ligand binding causes a conformation change that triggers signaling via guanine nucleotide-binding proteins (G proteins) and modulates the activity of downstream effectors, such as adenylate cyclase. HTR1A is coupled to G(i)/G(o) G alpha proteins and mediates inhibitory neurotransmission: signaling inhibits adenylate cyclase activity and activates a phosphatidylinositol-calcium second messenger system that regulates the release of Ca(2+) ions from intracellular stores. Beta-arrestin family members regulate signaling by mediating both receptor desensitization and resensitization processes. Plays a role in the regulation of 5-hydroxytryptamine release and in the regulation of dopamine and 5-hydroxytryptamine metabolism. Plays a role in the regulation of dopamine and 5-hydroxytryptamine levels in the brain, and thereby affects neural activity, mood and behavior. Plays a role in the response to anxiogenic stimuli. This is 5-hydroxytryptamine receptor 1A from Homo sapiens (Human).